The sequence spans 243 residues: Adenosylcobinamide-GDP ribazoletransferase (243 aa).

5 helical membrane passes run 31-51, 57-77, 109-129, 135-155, and 188-208; these read LLFY…LNIA, LLLH…ALHL, IAVV…LALI, MALI…FLTT, and LVIA…VFIW.

This sequence belongs to the CobS family. Requires Mg(2+) as cofactor.

The protein localises to the cell inner membrane. The catalysed reaction is alpha-ribazole + adenosylcob(III)inamide-GDP = adenosylcob(III)alamin + GMP + H(+). It carries out the reaction alpha-ribazole 5'-phosphate + adenosylcob(III)inamide-GDP = adenosylcob(III)alamin 5'-phosphate + GMP + H(+). Its pathway is cofactor biosynthesis; adenosylcobalamin biosynthesis; adenosylcobalamin from cob(II)yrinate a,c-diamide: step 7/7. Its function is as follows. Joins adenosylcobinamide-GDP and alpha-ribazole to generate adenosylcobalamin (Ado-cobalamin). Also synthesizes adenosylcobalamin 5'-phosphate from adenosylcobinamide-GDP and alpha-ribazole 5'-phosphate. The protein is Adenosylcobinamide-GDP ribazoletransferase of Pseudomonas fluorescens (strain Pf0-1).